The following is a 576-amino-acid chain: (+)-alpha-terpineol synthase (576 aa).

The (2E)-geranyl diphosphate site is built by arginine 286, aspartate 323, aspartate 327, arginine 466, and asparagine 469. Mg(2+)-binding residues include aspartate 323 and aspartate 327. The short motif at 323–327 (DDVYD) is the DDXXD motif element. Positions 469, 473, and 477 each coordinate Mg(2+).

The protein belongs to the terpene synthase family. Tpsb subfamily. Mg(2+) is required as a cofactor. Requires Mn(2+) as cofactor.

The enzyme catalyses (2E)-geranyl diphosphate + H2O = (R)-alpha-terpineol + diphosphate. Monoterpene synthase producing mainly (+)-alpha-terpineol (44%) and (-)-limonene (33.6%) and lower amounts of (E)-geraniol (5.9%), linalool (5.0%), myrcene (3.4%), (-)-alpha-pinene (3.3%), (+)-sabinene (3.0%) and alpha-terpinolene (1.6%). This chain is (+)-alpha-terpineol synthase, found in Santalum album (White sandalwood).